Consider the following 205-residue polypeptide: Protein-L-isoaspartate O-methyltransferase (205 aa).

Residue S56 is part of the active site.

It belongs to the methyltransferase superfamily. L-isoaspartyl/D-aspartyl protein methyltransferase family.

It is found in the cytoplasm. It catalyses the reaction [protein]-L-isoaspartate + S-adenosyl-L-methionine = [protein]-L-isoaspartate alpha-methyl ester + S-adenosyl-L-homocysteine. Its function is as follows. Catalyzes the methyl esterification of L-isoaspartyl residues in peptides and proteins that result from spontaneous decomposition of normal L-aspartyl and L-asparaginyl residues. It plays a role in the repair and/or degradation of damaged proteins. The chain is Protein-L-isoaspartate O-methyltransferase from Pyrobaculum aerophilum (strain ATCC 51768 / DSM 7523 / JCM 9630 / CIP 104966 / NBRC 100827 / IM2).